Reading from the N-terminus, the 90-residue chain is Small ribosomal subunit protein uS15c (90 aa).

The protein belongs to the universal ribosomal protein uS15 family. In terms of assembly, part of the 30S ribosomal subunit.

Its subcellular location is the plastid. The protein resides in the chloroplast. This Panax ginseng (Korean ginseng) protein is Small ribosomal subunit protein uS15c (rps15).